Reading from the N-terminus, the 435-residue chain is Rho GTPase-activating protein 4 (435 aa).

Positions 1–59 (MAKVLKSSQSCHFPSPSSSSSTSCGGGNDGSNRDPHSPFNISRREEEEEEEERSEKERE) are disordered. Residues 7-23 (SSQSCHFPSPSSSSSTS) are compositionally biased toward low complexity. The CRIB domain occupies 93–106 (IGVPTDVRHVAHVT). In terms of domain architecture, Rho-GAP spans 138–319 (VSTESMQLSY…LIVKTLKDRK (182 aa)). A disordered region spans residues 321–343 (SRDKLVPASNPSPRDHNGDQSSS).

In terms of biological role, acts as a GTPase activator for the Rac-type GTPase by converting it to an inactive GDP-bound state. Acts as a negative feedback regulator in tolerance to oxygen deprivation which requires ARAC4/ROP2. The polypeptide is Rho GTPase-activating protein 4 (ROPGAP4) (Arabidopsis thaliana (Mouse-ear cress)).